Here is a 380-residue protein sequence, read N- to C-terminus: MPIDPVALTADLVRCPSVTPEEGGALDLIERILSGAGFDCTRVDRNGVPNLFARWGRKGANRTFGFNGHTDVVPVGDAAAWTRDPFGGEIADGWLWGRGATDMKSGVAAFVAAAVDFVQETPPDGAVVLTITGDEEGDSTDGTVALLDWMAAEGEAMSVCLVGEPTCPERLGEMMKIGRRGSMTAFFTARGVQGHSAYPHRAKNPVAALARLIDRLSSHDLDYGTEHFDASTLAVTTFDTGNPATNVIPALCRATVNIRFNDAHSGASLTRWLEEEAARVAADTGVEIALSAKISGESFLTPPGELSELVARAVEAETGLRPEPSTSGGTSDARFVRAHCPVVEFGLVGKTMHQVDERVEVAQIEPLKAIYLRILKDYFA.

H69 serves as a coordination point for Zn(2+). D71 is an active-site residue. D102 contacts Zn(2+). Residue E135 is the Proton acceptor of the active site. Residues E136, E164, and H353 each contribute to the Zn(2+) site.

This sequence belongs to the peptidase M20A family. DapE subfamily. In terms of assembly, homodimer. Zn(2+) is required as a cofactor. Requires Co(2+) as cofactor.

The catalysed reaction is N-succinyl-(2S,6S)-2,6-diaminopimelate + H2O = (2S,6S)-2,6-diaminopimelate + succinate. Its pathway is amino-acid biosynthesis; L-lysine biosynthesis via DAP pathway; LL-2,6-diaminopimelate from (S)-tetrahydrodipicolinate (succinylase route): step 3/3. Catalyzes the hydrolysis of N-succinyl-L,L-diaminopimelic acid (SDAP), forming succinate and LL-2,6-diaminopimelate (DAP), an intermediate involved in the bacterial biosynthesis of lysine and meso-diaminopimelic acid, an essential component of bacterial cell walls. The polypeptide is Succinyl-diaminopimelate desuccinylase (Cereibacter sphaeroides (strain ATCC 17023 / DSM 158 / JCM 6121 / CCUG 31486 / LMG 2827 / NBRC 12203 / NCIMB 8253 / ATH 2.4.1.) (Rhodobacter sphaeroides)).